Here is a 426-residue protein sequence, read N- to C-terminus: Synaptotagmin-13 (426 aa).

The Vesicular segment spans residues 1 to 6 (MVLSVP). The chain crosses the membrane as a helical span at residues 7-29 (VIALGATLGTATSILALCGVTCL). Topologically, residues 30 to 426 (CRHMHPKKGL…QIAMWHQLHL (397 aa)) are cytoplasmic. 2 C2 domains span residues 158–275 (QAPK…AQWG) and 287–422 (GAGE…AMWH).

It belongs to the synaptotagmin family. Interacts with NRXN1. As to expression, expressed in brain, pancreas and kidney.

It is found in the membrane. May be involved in transport vesicle docking to the plasma membrane. This is Synaptotagmin-13 (SYT13) from Homo sapiens (Human).